The chain runs to 212 residues: Thiamine-phosphate synthase (212 aa).

4-amino-2-methyl-5-(diphosphooxymethyl)pyrimidine contacts are provided by residues 35 to 39 (QLRDK) and Asn67. 2 residues coordinate Mg(2+): Asp68 and Asp87. Residue Ser106 participates in 4-amino-2-methyl-5-(diphosphooxymethyl)pyrimidine binding. A 2-[(2R,5Z)-2-carboxy-4-methylthiazol-5(2H)-ylidene]ethyl phosphate-binding site is contributed by 132 to 134 (TGS). A 4-amino-2-methyl-5-(diphosphooxymethyl)pyrimidine-binding site is contributed by Lys135. 2-[(2R,5Z)-2-carboxy-4-methylthiazol-5(2H)-ylidene]ethyl phosphate contacts are provided by residues Gly163 and 183-184 (IS).

This sequence belongs to the thiamine-phosphate synthase family. It depends on Mg(2+) as a cofactor.

The catalysed reaction is 2-[(2R,5Z)-2-carboxy-4-methylthiazol-5(2H)-ylidene]ethyl phosphate + 4-amino-2-methyl-5-(diphosphooxymethyl)pyrimidine + 2 H(+) = thiamine phosphate + CO2 + diphosphate. It carries out the reaction 2-(2-carboxy-4-methylthiazol-5-yl)ethyl phosphate + 4-amino-2-methyl-5-(diphosphooxymethyl)pyrimidine + 2 H(+) = thiamine phosphate + CO2 + diphosphate. The enzyme catalyses 4-methyl-5-(2-phosphooxyethyl)-thiazole + 4-amino-2-methyl-5-(diphosphooxymethyl)pyrimidine + H(+) = thiamine phosphate + diphosphate. Its pathway is cofactor biosynthesis; thiamine diphosphate biosynthesis; thiamine phosphate from 4-amino-2-methyl-5-diphosphomethylpyrimidine and 4-methyl-5-(2-phosphoethyl)-thiazole: step 1/1. In terms of biological role, condenses 4-methyl-5-(beta-hydroxyethyl)thiazole monophosphate (THZ-P) and 2-methyl-4-amino-5-hydroxymethyl pyrimidine pyrophosphate (HMP-PP) to form thiamine monophosphate (TMP). This is Thiamine-phosphate synthase from Methanocella arvoryzae (strain DSM 22066 / NBRC 105507 / MRE50).